The primary structure comprises 77 residues: MKRERGRRGRKRVCSFCVDKATSIDYKETSKLRKYVTERGKILPRRISGNCAHHQRMLTTAIKRSRNIALLPFSTEA.

It belongs to the bacterial ribosomal protein bS18 family. Part of the 30S ribosomal subunit. Forms a tight heterodimer with protein bS6.

In terms of biological role, binds as a heterodimer with protein bS6 to the central domain of the 16S rRNA, where it helps stabilize the platform of the 30S subunit. This chain is Small ribosomal subunit protein bS18, found in Desulforamulus reducens (strain ATCC BAA-1160 / DSM 100696 / MI-1) (Desulfotomaculum reducens).